Reading from the N-terminus, the 393-residue chain is Metal tolerance protein C2 (393 aa).

A disordered region spans residues 1 to 23; the sequence is MERSISFNPRGDNELPDDRSSDV. Topologically, residues 1–113 are cytoplasmic; that stretch reads MERSISFNPR…VTSGNRQMKR (113 aa). Residues 11–21 are compositionally biased toward basic and acidic residues; it reads GDNELPDDRSS. A helical transmembrane segment spans residues 114-134; the sequence is LFLLIALNVLYSTTELSIGIF. At 135-139 the chain is on the vacuolar side; the sequence is TGRVG. The chain crosses the membrane as a helical span at residues 140–160; it reads LVSDAFHLTFGCGLLTFSLFA. Topologically, residues 161-186 are cytoplasmic; the sequence is MATSRKKPDHAYSYGYKRLEVLSAFT. A helical membrane pass occupies residues 187–207; it reads NALFLMFMSFSLAVEALHAFI. Over 208–214 the chain is Vacuolar; sequence QDESEHK. A helical membrane pass occupies residues 215 to 235; sequence HYLIVSAVTNLLVNLLGVWFF. Residues 236-259 are Cytoplasmic-facing; sequence RNYARVNIAYRKAEDMNYHSVCLH. Residues 260-280 traverse the membrane as a helical segment; that stretch reads VISDSIRSAGLILASWLLSLG. At 281-283 the chain is on the vacuolar side; that stretch reads VEN. A helical transmembrane segment spans residues 284-304; that stretch reads AEVLCLGLVSVTVFMLVMPLF. The Cytoplasmic segment spans residues 305–393; sequence KATGGVLLQM…QDLTLQTDYT (89 aa).

The protein belongs to the cation diffusion facilitator (CDF) transporter (TC 2.A.4) family.

Its subcellular location is the vacuole membrane. In terms of biological role, involved in sequestration of excess metal in the cytoplasm into vacuoles to maintain metal homeostasis. This Arabidopsis thaliana (Mouse-ear cress) protein is Metal tolerance protein C2 (MTPC2).